Reading from the N-terminus, the 639-residue chain is Chaperone protein DnaK (639 aa).

Thr-198 carries the post-translational modification Phosphothreonine; by autocatalysis. A disordered region spans residues 602-639 (QAKSQAQGGDNADAGKQANATADDVVDAEFEEVKDDKK). Acidic residues predominate over residues 625–639 (DVVDAEFEEVKDDKK).

It belongs to the heat shock protein 70 family.

Functionally, acts as a chaperone. The chain is Chaperone protein DnaK from Shewanella baltica (strain OS155 / ATCC BAA-1091).